The primary structure comprises 331 residues: 2-hydroxyacid dehydrogenase homolog (331 aa).

NAD(+) is bound by residues 154–155, 232–234, and D258; these read KI and TSR. R234 is an active-site residue. E263 is a catalytic residue. H295 (proton donor) is an active-site residue. 295-298 contributes to the NAD(+) binding site; it reads HQAF.

Belongs to the D-isomer specific 2-hydroxyacid dehydrogenase family.

In Haemophilus influenzae (strain ATCC 51907 / DSM 11121 / KW20 / Rd), this protein is 2-hydroxyacid dehydrogenase homolog (ddh).